The primary structure comprises 121 residues: Phosphoribosyl-ATP pyrophosphatase (121 aa).

This sequence belongs to the PRA-PH family.

Its subcellular location is the cytoplasm. It catalyses the reaction 1-(5-phospho-beta-D-ribosyl)-ATP + H2O = 1-(5-phospho-beta-D-ribosyl)-5'-AMP + diphosphate + H(+). Its pathway is amino-acid biosynthesis; L-histidine biosynthesis; L-histidine from 5-phospho-alpha-D-ribose 1-diphosphate: step 2/9. This Burkholderia multivorans (strain ATCC 17616 / 249) protein is Phosphoribosyl-ATP pyrophosphatase.